Consider the following 436-residue polypeptide: GTPase Der (436 aa).

2 consecutive EngA-type G domains span residues 4 to 167 (PVVA…PKDH) and 176 to 351 (IKFC…DNHA). Residues 10-17 (GRPNVGKS), 57-61 (DTGGI), 119-122 (NKID), 182-189 (GRPNVGKS), 229-233 (DTAGM), and 294-297 (NKWD) each bind GTP. Positions 352 to 436 (MRVQTNVLNE…PIKIIARPRK (85 aa)) constitute a KH-like domain.

Belongs to the TRAFAC class TrmE-Era-EngA-EngB-Septin-like GTPase superfamily. EngA (Der) GTPase family. In terms of assembly, associates with the 50S ribosomal subunit.

Functionally, GTPase that plays an essential role in the late steps of ribosome biogenesis. The protein is GTPase Der of Geobacillus thermodenitrificans (strain NG80-2).